Reading from the N-terminus, the 635-residue chain is Probable ethylene response sensor 2 (635 aa).

The next 3 membrane-spanning stretches (helical) occupy residues 24-44, 59-79, and 94-114; these read ISDF…IYFV, FGAF…TFAI, and ATAV…PDLL. Cu cation-binding residues include Cys-66 and His-70. In terms of domain architecture, GAF spans 159–308; it reads DRHTILRTTL…VVADQVAVAL (150 aa). The region spanning 351–589 is the Histidine kinase domain; the sequence is VMNHEMRTPM…MFFVKLGMPE (239 aa). The residue at position 354 (His-354) is a Phosphohistidine; by autocatalysis.

Belongs to the ethylene receptor family. As to quaternary structure, homodimer. Cu cation is required as a cofactor. Expressed in anthers and hulls.

The protein resides in the endoplasmic reticulum membrane. It carries out the reaction ATP + protein L-histidine = ADP + protein N-phospho-L-histidine.. Its function is as follows. Ethylene receptor related to bacterial two-component regulators. Acts as a negative regulator of ethylene signaling. May play a role in the regulation of flowering by up-regulating GI (GIGANTEA) and RCN1 and regulate starch accumulation by down-regulating the alpha-amylase AMY3D. This Oryza sativa subsp. indica (Rice) protein is Probable ethylene response sensor 2.